The sequence spans 64 residues: Large ribosomal subunit protein uL30 (64 aa).

It belongs to the universal ribosomal protein uL30 family. In terms of assembly, part of the 50S ribosomal subunit.

This Methylorubrum populi (strain ATCC BAA-705 / NCIMB 13946 / BJ001) (Methylobacterium populi) protein is Large ribosomal subunit protein uL30.